The chain runs to 238 residues: Large ribosomal subunit protein uL1 (238 aa).

The protein belongs to the universal ribosomal protein uL1 family. Part of the 50S ribosomal subunit.

Its function is as follows. Binds directly to 23S rRNA. The L1 stalk is quite mobile in the ribosome, and is involved in E site tRNA release. Protein L1 is also a translational repressor protein, it controls the translation of the L11 operon by binding to its mRNA. The chain is Large ribosomal subunit protein uL1 from Trichormus variabilis (strain ATCC 29413 / PCC 7937) (Anabaena variabilis).